Reading from the N-terminus, the 125-residue chain is Fumarate reductase subunit D (125 aa).

3 helical membrane-spanning segments follow: residues 29-49 (VTALVAPVLLLLFGLAFPLGW), 64-84 (NPITKLVVLVLVVLALFHAAH), and 102-122 (VIALWCYGMAVLGSATAGWML).

It belongs to the FrdD family. As to quaternary structure, part of an enzyme complex containing four subunits: a flavoprotein (FrdA), an iron-sulfur protein (FrdB), and two hydrophobic anchor proteins (FrdC and FrdD).

It localises to the cell membrane. In terms of biological role, anchors the catalytic components of the fumarate reductase complex to the cell membrane, binds quinones. The protein is Fumarate reductase subunit D of Mycobacterium bovis (strain BCG / Tokyo 172 / ATCC 35737 / TMC 1019).